A 236-amino-acid polypeptide reads, in one-letter code: Orotidine 5'-phosphate decarboxylase (236 aa).

Substrate is bound by residues aspartate 17, lysine 39, 66 to 75, threonine 125, arginine 186, glutamine 195, glycine 215, and arginine 216; that span reads DLKFHDIPNT. Residue lysine 68 is the Proton donor of the active site.

Belongs to the OMP decarboxylase family. Type 1 subfamily. In terms of assembly, homodimer.

The catalysed reaction is orotidine 5'-phosphate + H(+) = UMP + CO2. The protein operates within pyrimidine metabolism; UMP biosynthesis via de novo pathway; UMP from orotate: step 2/2. In terms of biological role, catalyzes the decarboxylation of orotidine 5'-monophosphate (OMP) to uridine 5'-monophosphate (UMP). In Buchnera aphidicola subsp. Acyrthosiphon pisum (strain 5A), this protein is Orotidine 5'-phosphate decarboxylase.